The sequence spans 319 residues: Vesicle-associated membrane protein-associated protein scs22 (319 aa).

In terms of domain architecture, MSP spans 1-121 (MALECDSTIV…SERKIRCVYS (121 aa)). Topologically, residues 1-298 (MALECDSTIV…GAKVVPQIHN (298 aa)) are cytoplasmic. Positions 127-150 (ANAHANAHHQPAQTTTTSIPTSAT) are enriched in low complexity. The interval 127–244 (ANAHANAHHQ…TTSPNNENNA (118 aa)) is disordered. Composition is skewed to polar residues over residues 151–165 (DNYT…QSYS), 185–201 (STAT…SAVS), and 231–244 (SVPT…ENNA). Thr-236 is subject to Phosphothreonine. Ser-237 and Ser-281 each carry phosphoserine. A helical; Anchor for type IV membrane protein membrane pass occupies residues 299–319 (TVTVQTAFLLAIICFLIGLLF).

The protein belongs to the VAMP-associated protein (VAP) (TC 9.B.17) family. Interacts with epr1.

Its subcellular location is the endoplasmic reticulum membrane. In terms of biological role, vesicle-associated membrane protein-associated protein (VAP) implicated in maintaining the cortical endoplasmic reticulum (ER)-plasma membrane (PM) attachment. ER-PM contacts function to modulate the distribution of contractile ring components to ensure robust ring assembly. ER-PM contacts function also in controlling exocytosis and maintenance of cell polarity regulating cell shape. VAPs play an important role in regulating eisosome assembly. VAPs also contribute to ER-phagy by tethering atg8 to the ER membrane, but also by maintaining the ER-plasma membrane contact. The chain is Vesicle-associated membrane protein-associated protein scs22 (scs22) from Schizosaccharomyces pombe (strain 972 / ATCC 24843) (Fission yeast).